Consider the following 233-residue polypeptide: C-type lectin domain family 2 member D6 (233 aa).

Residues Met-1–Ser-45 form a disordered region. At Met-1 to Lys-73 the chain is on the cytoplasmic side. Residues Arg-16–Gln-29 are compositionally biased toward polar residues. Over residues Ser-30–Ser-43 the composition is skewed to low complexity. The chain crosses the membrane as a helical; Signal-anchor for type II membrane protein span at residues Leu-74–Ala-94. At Leu-95 to Gln-233 the chain is on the extracellular side. The region spanning Val-119–Ser-230 is the C-type lectin domain. Asn-132 is a glycosylation site (N-linked (GlcNAc...) asparagine).

The protein localises to the cell membrane. Functionally, lectin-type cell surface receptor. The chain is C-type lectin domain family 2 member D6 (Clec2d6) from Rattus norvegicus (Rat).